The sequence spans 209 residues: Redox-sensing transcriptional repressor Rex (209 aa).

A DNA-binding region (H-T-H motif) is located at residues 16–55; that stretch reads LYYRFIQNLSLSGKQRVSSAELSEAVKVDSATIRRDFSYF. 90–95 provides a ligand contact to NAD(+); sequence GVGNLG.

Belongs to the transcriptional regulatory Rex family. Homodimer.

The protein localises to the cytoplasm. Modulates transcription in response to changes in cellular NADH/NAD(+) redox state. The chain is Redox-sensing transcriptional repressor Rex from Bacillus cereus (strain G9842).